The chain runs to 252 residues: Phosphate import ATP-binding protein PstB (252 aa).

The ABC transporter domain maps to 5-247; that stretch reads MRGQDVKVFY…PKEQRTQDYI (243 aa). 37-44 provides a ligand contact to ATP; the sequence is GPSGCGKS.

It belongs to the ABC transporter superfamily. Phosphate importer (TC 3.A.1.7) family. The complex is composed of two ATP-binding proteins (PstB), two transmembrane proteins (PstC and PstA) and a solute-binding protein (PstS).

It is found in the cell inner membrane. It catalyses the reaction phosphate(out) + ATP + H2O = ADP + 2 phosphate(in) + H(+). Functionally, part of the ABC transporter complex PstSACB involved in phosphate import. Responsible for energy coupling to the transport system. The polypeptide is Phosphate import ATP-binding protein PstB (Bartonella quintana (strain Toulouse) (Rochalimaea quintana)).